The sequence spans 327 residues: Phenylalanine--tRNA ligase alpha subunit (327 aa).

Glu-252 contacts Mg(2+).

It belongs to the class-II aminoacyl-tRNA synthetase family. Phe-tRNA synthetase alpha subunit type 1 subfamily. In terms of assembly, tetramer of two alpha and two beta subunits. Mg(2+) is required as a cofactor.

The protein resides in the cytoplasm. The enzyme catalyses tRNA(Phe) + L-phenylalanine + ATP = L-phenylalanyl-tRNA(Phe) + AMP + diphosphate + H(+). The protein is Phenylalanine--tRNA ligase alpha subunit of Sodalis glossinidius (strain morsitans).